Consider the following 359-residue polypeptide: 3-dehydroquinate synthase (359 aa).

Residues 70-75, 105-109, 129-130, K142, K151, and 169-172 each bind NAD(+); these read DGEQYK, GVIGD, TT, and FYKT. Zn(2+)-binding residues include E184, H247, and H264.

Belongs to the sugar phosphate cyclases superfamily. Dehydroquinate synthase family. Requires Co(2+) as cofactor. The cofactor is Zn(2+). NAD(+) serves as cofactor.

The protein localises to the cytoplasm. The catalysed reaction is 7-phospho-2-dehydro-3-deoxy-D-arabino-heptonate = 3-dehydroquinate + phosphate. The protein operates within metabolic intermediate biosynthesis; chorismate biosynthesis; chorismate from D-erythrose 4-phosphate and phosphoenolpyruvate: step 2/7. Functionally, catalyzes the conversion of 3-deoxy-D-arabino-heptulosonate 7-phosphate (DAHP) to dehydroquinate (DHQ). The chain is 3-dehydroquinate synthase from Francisella tularensis subsp. tularensis (strain WY96-3418).